A 1399-amino-acid polypeptide reads, in one-letter code: MKDLLNLLKNQGQVEEFDAIRIGLASPEMIRSWSFGEVKKPETINYRTFKPERDGLFCAKIFGPVKDYECLCGKYKRLKHRGVICEKCGVEVALAKVRRERMAHIELASPVAHIWFLKSLPSRIGLLMDMTLRDIERVLYFESYVVIDPGMTTLEKGQLLNDEQYFEALEEFGDDFDARMGAEAVRELLHAIDLEHEIGRLREEIPQTNSETKIKKLSKRLKLMEAFQGSGNLPEWMVLTVLPVLPPDLRPLVPLDGGRFATSDLNDLYRRVINRNNRLKRLLDLSAPDIIVRNEKRMLQEAVDALLDNGRRGRAITGSNKRPLKSLADMIKGKQGRFRQNLLGKRVDYSGRSVITVGPTLRLHQCGLPKKMALELFKPFIFGKLEMRGLATTIKAAKKMVERELPEVWDVLAEVIREHPVLLNRAPTLHRLGIQAFEPVLIEGKAIQLHPLVCAAYNADFDGDQMAVHVPLTLEAQLEARALMMSTNNILSPANGEPIIVPSQDVVLGLYYMTREAINAKGEGRVFADLQEVDRVFRAGEAALHAKIKVRINETVKDRDGSVTKNTRIVDTTVGRALLFQVVPAGLPYDVVNQPMKKKAISKLINQCYRVVGLKETVIFADQLMYTGFAYSTISGVSIGVNDFVIPDEKARIINSATDEVKEIESQYASGLVTQGEKYNKVIDLWSKANDEVSKAMMANLSKEKVIDREGKEVEQESFNSMYMMADSGARGSAAQIRQLAGMRGLMAKPDGSIIETPITANFREGLSVLQYFISTHGARKGLADTALKTANSGYLTRRLVDVAQDLVVTEIDCGTDHGLLMTPHIEGGDVVEPLGERVLGRVIARDVFKPGTEDVIVPAGTLVDEQWVEFIELNSIDEVIVRSPINCETRYGICAKCYGRDLARGHQVNIGEAVGVIAAQSIGEPGTQLTMRTFHIGGAASRTSAADSVQVKNGGMVRLHNLKQVERADGNLVAVSRSGELAIADEFGRERERYKLPYGAVISVKEGEKVEAGAIVAKWDPHTHPIVTELKGTVTFVGMEENITIKRQTDELTGLTNIEVLDVKDRPAAGKEIRPAIKMVDANGKDLYLPGTDVPAQYFLPANALVGVADGAQIGVGDVIARIPQETSKTRDITGGLPRVADLFEARRPKEASILAEVSGTIAFGKETKGKRRLVITPTDGSDPYEELIPKWRHLNVFEGEQVNRGEVISDGPSDPHDILRLLGVSALAKYIVNEIQDVYRLQGVKINDKHIETILRQMLRKVEISESGDSSFIKGDQMELTHVLVENERLAGEDKFISKFTRVLLGITKASLSTESFISAASFQETTRVLTEAAVTGKRDYLRGLKENVVVGRLIPAGTGLAYHSERKRRRDADKPLRVSASEVEAALTEALNSSGN.

Residues cysteine 70, cysteine 72, cysteine 85, and cysteine 88 each coordinate Zn(2+). Mg(2+)-binding residues include aspartate 460, aspartate 462, and aspartate 464. The Zn(2+) site is built by cysteine 814, cysteine 888, cysteine 895, and cysteine 898.

It belongs to the RNA polymerase beta' chain family. In terms of assembly, the RNAP catalytic core consists of 2 alpha, 1 beta, 1 beta' and 1 omega subunit. When a sigma factor is associated with the core the holoenzyme is formed, which can initiate transcription. It depends on Mg(2+) as a cofactor. Requires Zn(2+) as cofactor.

It carries out the reaction RNA(n) + a ribonucleoside 5'-triphosphate = RNA(n+1) + diphosphate. DNA-dependent RNA polymerase catalyzes the transcription of DNA into RNA using the four ribonucleoside triphosphates as substrates. The polypeptide is DNA-directed RNA polymerase subunit beta' (Pseudomonas putida (strain GB-1)).